A 245-amino-acid chain; its full sequence is 1-(5-phosphoribosyl)-5-[(5-phosphoribosylamino)methylideneamino] imidazole-4-carboxamide isomerase (245 aa).

Residue Asp-8 is the Proton acceptor of the active site. Catalysis depends on Asp-130, which acts as the Proton donor.

Belongs to the HisA/HisF family.

It is found in the cytoplasm. It catalyses the reaction 1-(5-phospho-beta-D-ribosyl)-5-[(5-phospho-beta-D-ribosylamino)methylideneamino]imidazole-4-carboxamide = 5-[(5-phospho-1-deoxy-D-ribulos-1-ylimino)methylamino]-1-(5-phospho-beta-D-ribosyl)imidazole-4-carboxamide. It participates in amino-acid biosynthesis; L-histidine biosynthesis; L-histidine from 5-phospho-alpha-D-ribose 1-diphosphate: step 4/9. This chain is 1-(5-phosphoribosyl)-5-[(5-phosphoribosylamino)methylideneamino] imidazole-4-carboxamide isomerase, found in Pseudomonas fluorescens (strain Pf0-1).